A 239-amino-acid polypeptide reads, in one-letter code: Large ribosomal subunit protein uL2 (239 aa).

2 disordered regions span residues 1–21 (MGKS…KSPS) and 203–239 (PFGG…GRRK). Over residues 222-239 (PPGRKVGHIAARRTGRRK) the composition is skewed to basic residues.

It belongs to the universal ribosomal protein uL2 family. In terms of assembly, part of the 50S ribosomal subunit. Forms a bridge to the 30S subunit in the 70S ribosome.

Its function is as follows. One of the primary rRNA binding proteins. Required for association of the 30S and 50S subunits to form the 70S ribosome, for tRNA binding and peptide bond formation. It has been suggested to have peptidyltransferase activity; this is somewhat controversial. Makes several contacts with the 16S rRNA in the 70S ribosome. The chain is Large ribosomal subunit protein uL2 from Pyrococcus furiosus (strain ATCC 43587 / DSM 3638 / JCM 8422 / Vc1).